We begin with the raw amino-acid sequence, 354 residues long: 5,10-methenyltetrahydromethanopterin hydrogenase (354 aa).

The protein belongs to the HMD family.

It carries out the reaction 5,10-methenyl-5,6,7,8-tetrahydromethanopterin + H2 = 5,10-methylenetetrahydromethanopterin + H(+). It participates in one-carbon metabolism; methanogenesis from CO(2); 5,10-methylene-5,6,7,8-tetrahydromethanopterin from 5,10-methenyl-5,6,7,8-tetrahydromethanopterin (hydrogen route): step 1/1. Its function is as follows. Catalyzes the reversible reduction of methenyl-H(4)MPT(+) to methylene-H(4)MPT. The sequence is that of 5,10-methenyltetrahydromethanopterin hydrogenase from Methanococcus maripaludis (strain C5 / ATCC BAA-1333).